The primary structure comprises 144 residues: Prefoldin subunit alpha (144 aa).

It belongs to the prefoldin alpha subunit family. Heterohexamer of two alpha and four beta subunits.

It is found in the cytoplasm. Its function is as follows. Molecular chaperone capable of stabilizing a range of proteins. Seems to fulfill an ATP-independent, HSP70-like function in archaeal de novo protein folding. In Methanococcus maripaludis (strain C5 / ATCC BAA-1333), this protein is Prefoldin subunit alpha.